The chain runs to 142 residues: Hemoglobin subunit alpha (142 aa).

A Globin domain is found at 2-142 (VLSAADKGHV…VSTVLTSKYR (141 aa)). A Phosphoserine modification is found at serine 4. Lysine 8 and lysine 12 each carry N6-succinyllysine. Lysine 17 carries the post-translational modification N6-acetyllysine; alternate. Lysine 17 bears the N6-succinyllysine; alternate mark. Tyrosine 25 is modified (phosphotyrosine). Position 36 is a phosphoserine (serine 36). Lysine 41 bears the N6-succinyllysine mark. At serine 50 the chain carries Phosphoserine. O2 is bound at residue histidine 59. Heme b is bound at residue histidine 88. Position 103 is a phosphoserine (serine 103). Position 109 is a phosphothreonine (threonine 109). Phosphoserine is present on serine 125. A phosphothreonine mark is found at threonine 135 and threonine 138. A Phosphoserine modification is found at serine 139.

Belongs to the globin family. Heterotetramer of two alpha chains and two beta chains. In terms of tissue distribution, red blood cells.

Functionally, involved in oxygen transport from the lung to the various peripheral tissues. Hemopressin acts as an antagonist peptide of the cannabinoid receptor CNR1. Hemopressin-binding efficiently blocks cannabinoid receptor CNR1 and subsequent signaling. The chain is Hemoglobin subunit alpha (HBA) from Notamacropus eugenii (Tammar wallaby).